Consider the following 276-residue polypeptide: NH(3)-dependent NAD(+) synthetase (276 aa).

43–50 lines the ATP pocket; it reads GISGGVDS. Aspartate 49 serves as a coordination point for Mg(2+). Deamido-NAD(+) is bound at residue arginine 146. Residue threonine 166 coordinates ATP. Residue glutamate 171 participates in Mg(2+) binding. The deamido-NAD(+) site is built by lysine 179 and aspartate 186. 2 residues coordinate ATP: lysine 195 and threonine 217. 266-267 provides a ligand contact to deamido-NAD(+); sequence HK.

This sequence belongs to the NAD synthetase family. Homodimer.

It catalyses the reaction deamido-NAD(+) + NH4(+) + ATP = AMP + diphosphate + NAD(+) + H(+). Its pathway is cofactor biosynthesis; NAD(+) biosynthesis; NAD(+) from deamido-NAD(+) (ammonia route): step 1/1. Catalyzes the ATP-dependent amidation of deamido-NAD to form NAD. Uses ammonia as a nitrogen source. This Vibrio campbellii (strain ATCC BAA-1116) protein is NH(3)-dependent NAD(+) synthetase.